The primary structure comprises 469 residues: Adenosylhomocysteinase (469 aa).

Thr63, Asp139, and Glu164 together coordinate substrate. Residue 165 to 167 (TTT) coordinates NAD(+). The substrate site is built by Lys194 and Asp198. NAD(+) is bound by residues Asn199, 228 to 233 (GYGDVG), Glu251, Asn300, 321 to 323 (IGH), and Asn375.

The protein belongs to the adenosylhomocysteinase family. Requires NAD(+) as cofactor.

It is found in the cytoplasm. The enzyme catalyses S-adenosyl-L-homocysteine + H2O = L-homocysteine + adenosine. It participates in amino-acid biosynthesis; L-homocysteine biosynthesis; L-homocysteine from S-adenosyl-L-homocysteine: step 1/1. Functionally, may play a key role in the regulation of the intracellular concentration of adenosylhomocysteine. This is Adenosylhomocysteinase from Ectopseudomonas mendocina (strain ymp) (Pseudomonas mendocina).